We begin with the raw amino-acid sequence, 292 residues long: Elongation factor Ts (292 aa).

The involved in Mg(2+) ion dislocation from EF-Tu stretch occupies residues 79–82 (TDFV).

This sequence belongs to the EF-Ts family.

It is found in the cytoplasm. Functionally, associates with the EF-Tu.GDP complex and induces the exchange of GDP to GTP. It remains bound to the aminoacyl-tRNA.EF-Tu.GTP complex up to the GTP hydrolysis stage on the ribosome. In Staphylococcus haemolyticus (strain JCSC1435), this protein is Elongation factor Ts.